We begin with the raw amino-acid sequence, 258 residues long: ER membrane protein complex subunit 3 (258 aa).

A run of 3 helical transmembrane segments spans residues 8–28 (PALR…IGIL), 123–143 (VVPQ…FILL), and 173–193 (SISW…LLLG).

It belongs to the EMC3 family.

It is found in the cytoplasm. The protein localises to the membrane. The chain is ER membrane protein complex subunit 3 from Schizosaccharomyces pombe (strain 972 / ATCC 24843) (Fission yeast).